We begin with the raw amino-acid sequence, 625 residues long: Somatic embryogenesis receptor kinase 1 (625 aa).

The signal sequence occupies residues 1 to 26 (MESSYVVFILLSLILLPNHSLWLASA). At 27 to 238 (NLEGDALHTL…STPSGYGITG (212 aa)) the chain is on the extracellular side. C58 and C65 are joined by a disulfide. 2 leucine-rich repeat receptor-like protein kinase binding regions span residues 59–78 (TWFH…DLGN) and 97–102 (YLELYS). 61–62 (FH) provides a ligand contact to brassinolide. 4 LRR repeats span residues 92–116 (LKNL…LGNL), 118–140 (NLVS…LGKL), 141–164 (SKLR…LTNI), and 165–189 (TTLQ…SFSL). N104 and N115 each carry an N-linked (GlcNAc...) asparagine glycan. Leucine-rich repeat receptor-like protein kinase binding regions lie at residues 123–126 (DLYL) and 145–147 (FLR). N150, N163, and N184 each carry an N-linked (GlcNAc...) asparagine glycan. The leucine-rich repeat receptor-like protein kinase binding stretch occupies residues 171-194 (DLSNNRLSGSVPDNGSFSLFTPIS). The cysteines at positions 202 and 210 are disulfide-linked. The chain crosses the membrane as a helical span at residues 239–259 (AIAGGVAAGAALLFAAPAIAF). Residues 260–625 (AWWRRRKPLD…LHAVELSGPR (366 aa)) lie on the Cytoplasmic side of the membrane. Phosphoserine is present on residues S291, S299, and S303. A Protein kinase domain is found at 302–589 (FSNKNILGRG…GLAEKWDEWQ (288 aa)). 308-316 (LGRGGFGKV) provides a ligand contact to ATP. Phosphothreonine is present on T325. K330 serves as a coordination point for ATP. Residues T337 and T346 each carry the phosphothreonine modification. Phosphoserine occurs at positions 352, 383, 386, and 394. T402 carries the phosphothreonine modification. S415 is modified (phosphoserine). The Proton acceptor role is filled by D429. Y456 carries the post-translational modification Phosphotyrosine. T459, T462, T463, and T468 each carry phosphothreonine. Y476 bears the Phosphotyrosine mark. The residue at position 478 (S478) is a Phosphoserine. T479 is modified (phosphothreonine). A Phosphoserine modification is found at S483. At T541 the chain carries Phosphothreonine. Position 543 is a phosphotyrosine (Y543). T559 is subject to Phosphothreonine. S606 and S612 each carry phosphoserine. T613 bears the Phosphothreonine mark. Phosphotyrosine is present on Y614. At S622 the chain carries Phosphoserine.

This sequence belongs to the protein kinase superfamily. Ser/Thr protein kinase family. In terms of assembly, monomer, homo- and heterodimer. Interacts with KAPP, CDC48A, GRF6 or GRF7, SERK2, BRI1 and SERK3/BAK1 to form the SERK1 signaling complex. Bind to BRI1 in a brassinolide-dependent manner. Heterodimer with PSKR1. Interacts with the EF-Tu receptor EFR and FLS2 in a specific ligand-induced manner. Interacts with ERECTA in a EPF2-induced manner. Interacts with ERL1 in a EPF1-induced manner. Interacts with TMM. In the presence of the signal peptide RGF1, interacts with RGI1/RGFR4/RCH2, RGI2/RGFR3/RCH1, RGI3/RGFR1, RGI4/RGFR2/SKM2 and RGI5/RGFR5. Requires Mg(2+) as cofactor. Glycosylated. Important for targeting to the plasma membrane. Post-translationally, intermolecular autophosphorylation. The catalytic activity of SERK1 depends on the presence of a phosphorylated Thr residue in SERK1. The phosphorylation is induced by brassinosteroids. Transphosphorylation by BRI1 occurs only on Ser-299 and Thr-462. Dephosphorylation of threonine residues by the kinase-associated protein phosphatase (KAPP) is involved in SERK1 endocytosis. As to expression, expressed in flowers, tapetum, developing microspores, all cells of the embryo sac, provascular strands and developing vascular bundles. Low expression in adult vascular tissue. Detected in root meristem.

It is found in the cell membrane. Its subcellular location is the endoplasmic reticulum membrane. It carries out the reaction L-seryl-[protein] + ATP = O-phospho-L-seryl-[protein] + ADP + H(+). The catalysed reaction is L-threonyl-[protein] + ATP = O-phospho-L-threonyl-[protein] + ADP + H(+). It catalyses the reaction L-tyrosyl-[protein] + ATP = O-phospho-L-tyrosyl-[protein] + ADP + H(+). With respect to regulation, inhibited by manganese. In terms of biological role, dual specificity kinase acting on both serine/threonine- and tyrosine-containing substrates. Phosphorylates BRI1 on 'Ser-887' and CDC48 on at least one threonine residue and on 'Ser-41'. Confers embryogenic competence. Acts redundantly with SERK2 as a control point for sporophytic development controlling male gametophyte production. Involved in the brassinolide signaling pathway. Probably required during small peptide (e.g. RGF1) signaling. Involved in the perception of phytosulfokine and subsequent signal transduction. Acts as a RLK5 coreceptor and promotes high-affinity IDA sensing, thus being a positive regulator of floral abscission. In Arabidopsis thaliana (Mouse-ear cress), this protein is Somatic embryogenesis receptor kinase 1.